We begin with the raw amino-acid sequence, 79 residues long: Small ribosomal subunit protein bS18 (79 aa).

This sequence belongs to the bacterial ribosomal protein bS18 family. As to quaternary structure, part of the 30S ribosomal subunit. Forms a tight heterodimer with protein bS6.

Its function is as follows. Binds as a heterodimer with protein bS6 to the central domain of the 16S rRNA, where it helps stabilize the platform of the 30S subunit. This chain is Small ribosomal subunit protein bS18, found in Streptococcus thermophilus (strain CNRZ 1066).